Reading from the N-terminus, the 424-residue chain is Histidine--tRNA ligase (424 aa).

This sequence belongs to the class-II aminoacyl-tRNA synthetase family. In terms of assembly, homodimer.

The protein localises to the cytoplasm. It carries out the reaction tRNA(His) + L-histidine + ATP = L-histidyl-tRNA(His) + AMP + diphosphate + H(+). The protein is Histidine--tRNA ligase of Shewanella frigidimarina (strain NCIMB 400).